The primary structure comprises 287 residues: uncharacterized protein (287 aa).

This is an uncharacterized protein from Acanthamoeba polyphaga mimivirus (APMV).